Consider the following 151-residue polypeptide: Protein archease-like (151 aa).

Ca(2+) contacts are provided by Asp-20, Asp-150, and Ile-151.

This sequence belongs to the archease family.

In terms of biological role, component of the tRNA-splicing ligase complex required to facilitate the enzymatic turnover of catalytic subunit RtcB. This Dictyostelium discoideum (Social amoeba) protein is Protein archease-like.